Here is a 287-residue protein sequence, read N- to C-terminus: Putative sugar uptake protein LJ_0170 (287 aa).

10 helical membrane passes run 4–23, 28–50, 56–78, 91–108, 118–137, 150–169, 179–198, 211–230, 240–259, and 266–285; these read VYLFLPAIGWGLMPLVIASV, VYNQIVGTVAASFIFGAIVMAIM, WSLFLLSALGGACWVIGQVGQYI, ISTGLQLIGVPLVGVLAF, LYGFIGILVLIIGVVLTSFT, VSTIILLVLTSLGYITSSSI, SIFFGQTFGMLVAVFIYTLV, VQSGGAGILYAIAALAYILS, FVISQLCVVISTLGGLIFLH, and GLIFTIAGLILIIGGAMLTT.

It belongs to the GRP transporter (TC 2.A.7.5) family.

It is found in the cell membrane. The polypeptide is Putative sugar uptake protein LJ_0170 (Lactobacillus johnsonii (strain CNCM I-12250 / La1 / NCC 533)).